A 509-amino-acid polypeptide reads, in one-letter code: ATP synthase subunit alpha (509 aa).

169–176 (GDRKTGKT) is a binding site for ATP.

The protein belongs to the ATPase alpha/beta chains family. In terms of assembly, F-type ATPases have 2 components, CF(1) - the catalytic core - and CF(0) - the membrane proton channel. CF(1) has five subunits: alpha(3), beta(3), gamma(1), delta(1), epsilon(1). CF(0) has three main subunits: a(1), b(2) and c(9-12). The alpha and beta chains form an alternating ring which encloses part of the gamma chain. CF(1) is attached to CF(0) by a central stalk formed by the gamma and epsilon chains, while a peripheral stalk is formed by the delta and b chains.

It is found in the cell membrane. It catalyses the reaction ATP + H2O + 4 H(+)(in) = ADP + phosphate + 5 H(+)(out). Produces ATP from ADP in the presence of a proton gradient across the membrane. The alpha chain is a regulatory subunit. In Lacticaseibacillus casei (strain BL23) (Lactobacillus casei), this protein is ATP synthase subunit alpha.